Here is a 151-residue protein sequence, read N- to C-terminus: MKVIETKYNGKLEVAEDRLIAFDQGIPAFEDEKEFVLLPFEEGTPYYTLQSTKTVDLAFIIVNPFSFFPEYRVKLPEATIVQLNITNENDVAIFSLLTVKEPFSETTVNLQAPIVINANKQMGKQLVLGDTAYDRKQPLFQKELVLAKEAK.

Belongs to the FliW family. As to quaternary structure, interacts with translational regulator CsrA and flagellin(s).

It is found in the cytoplasm. Its function is as follows. Acts as an anti-CsrA protein, binds CsrA and prevents it from repressing translation of its target genes, one of which is flagellin. Binds to flagellin and participates in the assembly of the flagellum. The sequence is that of Flagellar assembly factor FliW from Halalkalibacterium halodurans (strain ATCC BAA-125 / DSM 18197 / FERM 7344 / JCM 9153 / C-125) (Bacillus halodurans).